Consider the following 1078-residue polypeptide: Protein U90 (1078 aa).

The span at 1–12 (MESAKDTTSTSM) shows a compositional bias: polar residues. Disordered regions lie at residues 1–28 (MESAKDTTSTSMFILGKPSGNNMESNEE), 464–483 (SPTDNNIPTPSKNNESPTRQ), 703–732 (HMNNTNENTPFSKSLYSPPEVTPSKEDHKT), and 781–818 (ESEDEEDGNNIIDKSMLEKTIKSEPNSESSSESDDCTS).

This chain is Protein U90 (U90), found in Homo sapiens (Human).